The chain runs to 140 residues: Hemoglobin subunit alpha (140 aa).

Residues 1-140 (LSAADKGHVK…VSTVLTSKYR (140 aa)) enclose the Globin domain. Ser2 is subject to Phosphoserine. N6-succinyllysine occurs at positions 6 and 10. The residue at position 15 (Lys15) is an N6-acetyllysine; alternate. Position 15 is an N6-succinyllysine; alternate (Lys15). Tyr23 bears the Phosphotyrosine mark. Phosphoserine is present on Ser34. Lys39 carries the N6-succinyllysine modification. Phosphoserine is present on Ser48. Position 57 (His57) interacts with O2. His86 serves as a coordination point for heme b. Ser101 is modified (phosphoserine). Thr107 is subject to Phosphothreonine. Position 123 is a phosphoserine (Ser123). Phosphothreonine is present on residues Thr133 and Thr136. Ser137 carries the phosphoserine modification.

Belongs to the globin family. As to quaternary structure, heterotetramer of two alpha chains and two beta chains. As to expression, red blood cells.

In terms of biological role, involved in oxygen transport from the lung to the various peripheral tissues. Its function is as follows. Hemopressin acts as an antagonist peptide of the cannabinoid receptor CNR1. Hemopressin-binding efficiently blocks cannabinoid receptor CNR1 and subsequent signaling. The sequence is that of Hemoglobin subunit alpha (HBA) from Tragelaphus strepsiceros (Greater kudu).